The primary structure comprises 406 residues: Collagen and calcium-binding EGF domain-containing protein 1 (406 aa).

Residues 1–34 form the signal peptide; the sequence is MVPPPPSRGGAARGQLGRSLGPLLLLLALGHTWT. The EGF-like; calcium-binding domain occupies 134 to 175; the sequence is DIDECASSNGTLCAHICINTLGSYRCECREGYIREDDGKTCT. 3 cysteine pairs are disulfide-bonded: Cys-138-Cys-150, Cys-146-Cys-159, and Cys-161-Cys-174. Residue Asn-142 is glycosylated (N-linked (GlcNAc...) asparagine). Residue Asn-182 is glycosylated (N-linked (GlcNAc...) asparagine). 2 disordered regions span residues 244–335 and 360–406; these read YLPG…PGSF and RTHS…DFYP. Collagen-like domains lie at 245–290 and 300–333; these read LPGP…PMGP and GRRGPVGPPGAPGRDGSKGERGAPGPRGSPGPPG. Residues 270 to 279 are compositionally biased toward pro residues; sequence PGMPGPPGQP. A compositionally biased stretch (low complexity) spans 281-292; it reads PRGSMGPMGPSP. Ser-385 is a glycosylation site (O-linked (Xyl...) (chondroitin sulfate) serine). Residues 386–406 show a composition bias toward basic and acidic residues; that stretch reads GDDHPRRTETRDLRAPRDFYP.

Belongs to the CCBE1 family. As to expression, detected in fibroblasts and urine (at protein level). Not expressed in blood or lymphatic endothelial cells.

Its subcellular location is the secreted. Its function is as follows. Required for lymphangioblast budding and angiogenic sprouting from venous endothelium during embryogenesis. This chain is Collagen and calcium-binding EGF domain-containing protein 1 (CCBE1), found in Homo sapiens (Human).